Reading from the N-terminus, the 374-residue chain is Chaperone protein DnaJ (374 aa).

One can recognise a J domain in the interval 5–70 (CYYEILNVSK…SKRSRYDQFG (66 aa)). A CR-type zinc finger spans residues 130–207 (GVEKEITIPR…CYGNGKVKKQ (78 aa)). 8 residues coordinate Zn(2+): Cys143, Cys146, Cys159, Cys162, Cys181, Cys184, Cys195, and Cys198. 4 CXXCXGXG motif repeats span residues 143–150 (CDSCDGTG), 159–166 (CHACHGQG), 181–188 (CPVCNGTG), and 195–202 (CDACYGNG).

The protein belongs to the DnaJ family. In terms of assembly, homodimer. Requires Zn(2+) as cofactor.

It is found in the cytoplasm. Its function is as follows. Participates actively in the response to hyperosmotic and heat shock by preventing the aggregation of stress-denatured proteins and by disaggregating proteins, also in an autonomous, DnaK-independent fashion. Unfolded proteins bind initially to DnaJ; upon interaction with the DnaJ-bound protein, DnaK hydrolyzes its bound ATP, resulting in the formation of a stable complex. GrpE releases ADP from DnaK; ATP binding to DnaK triggers the release of the substrate protein, thus completing the reaction cycle. Several rounds of ATP-dependent interactions between DnaJ, DnaK and GrpE are required for fully efficient folding. Also involved, together with DnaK and GrpE, in the DNA replication of plasmids through activation of initiation proteins. This Francisella tularensis subsp. tularensis (strain FSC 198) protein is Chaperone protein DnaJ.